Reading from the N-terminus, the 283-residue chain is Bifunctional protein FolD (283 aa).

NADP(+) contacts are provided by residues 165–167 (GAS) and Ser190.

It belongs to the tetrahydrofolate dehydrogenase/cyclohydrolase family. In terms of assembly, homodimer.

The catalysed reaction is (6R)-5,10-methylene-5,6,7,8-tetrahydrofolate + NADP(+) = (6R)-5,10-methenyltetrahydrofolate + NADPH. It carries out the reaction (6R)-5,10-methenyltetrahydrofolate + H2O = (6R)-10-formyltetrahydrofolate + H(+). The protein operates within one-carbon metabolism; tetrahydrofolate interconversion. Catalyzes the oxidation of 5,10-methylenetetrahydrofolate to 5,10-methenyltetrahydrofolate and then the hydrolysis of 5,10-methenyltetrahydrofolate to 10-formyltetrahydrofolate. The protein is Bifunctional protein FolD of Cupriavidus pinatubonensis (strain JMP 134 / LMG 1197) (Cupriavidus necator (strain JMP 134)).